The sequence spans 619 residues: Nuclear hormone receptor family member nhr-6 (619 aa).

The segment covering 1 to 18 (MEQLSIQTDELQDQFSNC) has biased composition (polar residues). 4 disordered regions span residues 1–29 (MEQLSIQTDELQDQFSNCSPASVDSSYSS), 58–86 (MSKNSSCSSSFDYGEFGPSSSSRKGSKTT), 103–134 (QVNTVPKPTKTEVESIPEEFEQKPSSSSHRLP), and 196–232 (QHFPVSDSRRGSQGTTSSSNNTGGTPSPHSSSLPTSP). Residues 19-29 (SPASVDSSYSS) show a composition bias toward low complexity. Polar residues predominate over residues 125-134 (KPSSSSHRLP). A compositionally biased stretch (low complexity) spans 206-232 (GSQGTTSSSNNTGGTPSPHSSSLPTSP). Positions 265-340 (DKMCAVCNDR…VGMVKEIVRH (76 aa)) form a DNA-binding region, nuclear receptor. 2 NR C4-type zinc fingers span residues 268–288 (CAVCNDRAVCLHYGARTCEGC) and 304–328 (CAGNKTCPIDKRYRSRCQYCRYQKC). Positions 345 to 365 (GRRGRLSSKTKLARSEDQPSP) are disordered. A compositionally biased stretch (basic residues) spans 346–356 (RRGRLSSKTKL). Residues 365 to 600 (PPLPLLALMG…STDAPPACGS (236 aa)) enclose the NR LBD domain. Residues 589–600 (LRSTDAPPACGS) are AF-2.

Belongs to the nuclear hormone receptor family. NR4 subfamily. In hermaphrodites, expressed in the developing spermatheca and dorsal uterus. Expression includes the 8 cells of the dorsal somatic gonad primordium and the sujc cells that form the core of the spermatheca-uterine valve. Expressed in the precursor cells of the spermatheca-sheath lineages (SS cells) and in the precursors and descendents of the dorsal-uterine lineage (DU cells). In both hermaphroditic and male animals, expressed in a pair of head chemosensory neurons.

It localises to the nucleus. In terms of biological role, transcriptional activator that induces gene expression by binding to the NGFI-B response element (NBRE) 5'-AAAGGTCA-3'. Required for proper morphogenesis of the spermatheca and the spermatheca-uterine valve formation. Promotes cell proliferation and differentiation of the spermatheca precursor cells during spermatheca development in larval stage L4. Might play a role in promoting G1/S phase progression in the spermatheca precursor cell lineage. Also required for the differentiation of the spermatheca-uterine junction core (sujc) cells which are generating the spermatheca-uterine valve. This chain is Nuclear hormone receptor family member nhr-6 (nhr-6), found in Caenorhabditis elegans.